Here is a 156-residue protein sequence, read N- to C-terminus: Ribosomal RNA large subunit methyltransferase H (156 aa).

Residues L72, G104, and 123-128 each bind S-adenosyl-L-methionine; that span reads LGKMVW.

Belongs to the RNA methyltransferase RlmH family. Homodimer.

It localises to the cytoplasm. It carries out the reaction pseudouridine(1915) in 23S rRNA + S-adenosyl-L-methionine = N(3)-methylpseudouridine(1915) in 23S rRNA + S-adenosyl-L-homocysteine + H(+). Its function is as follows. Specifically methylates the pseudouridine at position 1915 (m3Psi1915) in 23S rRNA. The chain is Ribosomal RNA large subunit methyltransferase H from Roseobacter denitrificans (strain ATCC 33942 / OCh 114) (Erythrobacter sp. (strain OCh 114)).